Here is a 393-residue protein sequence, read N- to C-terminus: Phosphoglycerate kinase (393 aa).

Substrate-binding positions include 22 to 24 (DFN), Arg37, 60 to 63 (HLGR), Arg119, and Arg152. Residues Lys202, Gly293, Glu324, and 350-353 (GGDS) each bind ATP.

The protein belongs to the phosphoglycerate kinase family. Monomer.

The protein resides in the cytoplasm. It carries out the reaction (2R)-3-phosphoglycerate + ATP = (2R)-3-phospho-glyceroyl phosphate + ADP. Its pathway is carbohydrate degradation; glycolysis; pyruvate from D-glyceraldehyde 3-phosphate: step 2/5. The polypeptide is Phosphoglycerate kinase (pgk) (Borreliella burgdorferi (strain ATCC 35210 / DSM 4680 / CIP 102532 / B31) (Borrelia burgdorferi)).